The primary structure comprises 73 residues: Large ribosomal subunit protein bL31 (73 aa).

Positions 16, 18, 38, and 41 each coordinate Zn(2+).

This sequence belongs to the bacterial ribosomal protein bL31 family. Type A subfamily. As to quaternary structure, part of the 50S ribosomal subunit. It depends on Zn(2+) as a cofactor.

Its function is as follows. Binds the 23S rRNA. The chain is Large ribosomal subunit protein bL31 from Vibrio vulnificus (strain CMCP6).